The chain runs to 43 residues: Protein PsbN (43 aa).

A helical transmembrane segment spans residues 5–27 (TLVAIPISCLLVSFTGYALYTAF).

It belongs to the PsbN family.

The protein localises to the plastid. The protein resides in the chloroplast thylakoid membrane. Functionally, may play a role in photosystem I and II biogenesis. The sequence is that of Protein PsbN from Sphagnum cuspidatum (Bog moss).